Reading from the N-terminus, the 175-residue chain is Cytidylate kinase (175 aa).

7 to 15 serves as a coordination point for ATP; sequence GLPGSGTTT.

This sequence belongs to the cytidylate kinase family. Type 2 subfamily.

The protein resides in the cytoplasm. The catalysed reaction is CMP + ATP = CDP + ADP. It catalyses the reaction dCMP + ATP = dCDP + ADP. This Methanococcoides burtonii (strain DSM 6242 / NBRC 107633 / OCM 468 / ACE-M) protein is Cytidylate kinase.